We begin with the raw amino-acid sequence, 827 residues long: Copper-transporting ATPase 2 (827 aa).

2 HMA domains span residues 15–80 (VSTN…YAPR) and 82–148 (ATEE…YELR). The Cu cation site is built by Cys-26, Cys-29, Cys-93, and Cys-96. Transmembrane regions (helical) follow at residues 174–194 (VTIS…SHFI), 210–230 (NLYL…LRFF), 246–266 (SLVV…TFVP), 271–291 (SGTA…VLLG), 430–450 (GWFV…WYTF), and 458–478 (FALV…MGLA). Asp-515 (4-aspartylphosphate intermediate) is an active-site residue. Mg(2+) is bound by residues Asp-714 and Asp-718. Transmembrane regions (helical) follow at residues 771–793 (NLFW…LYPV) and 797–819 (LLSP…GNAL).

This sequence belongs to the cation transport ATPase (P-type) (TC 3.A.3) family. Type IB subfamily.

The protein resides in the cell membrane. The catalysed reaction is Cu(2+)(in) + ATP + H2O = Cu(2+)(out) + ADP + phosphate + H(+). Functionally, involved in copper transport. This is Copper-transporting ATPase 2 (actP2) from Rhizobium meliloti (strain 1021) (Ensifer meliloti).